A 281-amino-acid chain; its full sequence is Lectin (281 aa).

The first 26 residues, 1 to 26 (MATYKLCSVLALSLTLFLLILNKVNS), serve as a signal peptide directing secretion. 2 N-linked (GlcNAc...) asparagine glycosylation sites follow: asparagine 43 and asparagine 139. Residues 269–281 (AVIPTSNHNTFAI) constitute a propeptide that is removed on maturation.

The protein belongs to the leguminous lectin family. As to quaternary structure, homodimer. A minor C-terminal proteolytic processing site is observed at position 268.

Functionally, galactose and N-acetyllactosamine specific lectin. Binds to the H-2 blood type determinant fucosyl-N-acetyllactosamine. This chain is Lectin, found in Erythrina corallodendron (Coral tree).